We begin with the raw amino-acid sequence, 387 residues long: MSADRLPSYSVAELNTAIGSLLERGFAPRFLLEATVSRPQLKKGHLWLTLTDGSASISGVVWASKLAQLSYQPKDGDGVTVVGKLNFWAARASLTVQALDIRPSLSTVLRDFERVRQVLEQEGVIDPSRLRPLPSQPASIAVLTSVPSSALADMLRTAAERWPLTQLIVVPIPVQGSVAPTIINTLEAIAERTAELGLQALVLARGGGSREDLAVFDNEALCRLLANYPIPVVTGLGHEDDLTVADLVADHRAATPTAAIVALLPDREAERQGLTQRQSRLKDTLLGRILRERQRLQDRAVALQQQSPREKIMRKRQELIQKHQLLKALSPERWLKRGLALISNKAGDPIPGLESVKIGDQLNIRMSDGSLEARVDQIQPSAPNTTS.

The protein belongs to the XseA family. As to quaternary structure, heterooligomer composed of large and small subunits.

It localises to the cytoplasm. It carries out the reaction Exonucleolytic cleavage in either 5'- to 3'- or 3'- to 5'-direction to yield nucleoside 5'-phosphates.. Functionally, bidirectionally degrades single-stranded DNA into large acid-insoluble oligonucleotides, which are then degraded further into small acid-soluble oligonucleotides. The sequence is that of Exodeoxyribonuclease 7 large subunit from Synechococcus sp. (strain CC9605).